The chain runs to 198 residues: V-type ATP synthase subunit E (198 aa).

It belongs to the V-ATPase E subunit family.

In terms of biological role, produces ATP from ADP in the presence of a proton gradient across the membrane. This is V-type ATP synthase subunit E from Clostridium novyi (strain NT).